The chain runs to 424 residues: Dihydroorotase (424 aa).

The Zn(2+) site is built by histidine 61 and histidine 63. Residues 63–65 and asparagine 95 each bind substrate; that span reads HLR. Residues aspartate 153, histidine 180, and histidine 233 each contribute to the Zn(2+) site. Asparagine 279 contributes to the substrate binding site. Aspartate 306 contacts Zn(2+). The active site involves aspartate 306. Substrate is bound at residue histidine 310.

The protein belongs to the metallo-dependent hydrolases superfamily. DHOase family. Class I DHOase subfamily. Zn(2+) is required as a cofactor.

The enzyme catalyses (S)-dihydroorotate + H2O = N-carbamoyl-L-aspartate + H(+). It participates in pyrimidine metabolism; UMP biosynthesis via de novo pathway; (S)-dihydroorotate from bicarbonate: step 3/3. Its function is as follows. Catalyzes the reversible cyclization of carbamoyl aspartate to dihydroorotate. This chain is Dihydroorotase, found in Geobacter metallireducens (strain ATCC 53774 / DSM 7210 / GS-15).